The sequence spans 192 residues: dTTP/UTP pyrophosphatase (192 aa).

The active-site Proton acceptor is D70.

The protein belongs to the Maf family. YhdE subfamily. A divalent metal cation serves as cofactor.

Its subcellular location is the cytoplasm. The enzyme catalyses dTTP + H2O = dTMP + diphosphate + H(+). The catalysed reaction is UTP + H2O = UMP + diphosphate + H(+). Its function is as follows. Nucleoside triphosphate pyrophosphatase that hydrolyzes dTTP and UTP. May have a dual role in cell division arrest and in preventing the incorporation of modified nucleotides into cellular nucleic acids. This chain is dTTP/UTP pyrophosphatase, found in Clostridium perfringens (strain SM101 / Type A).